A 623-amino-acid chain; its full sequence is Phosphatidylinositol-3-phosphatase SAC1 (623 aa).

The Cytoplasmic portion of the chain corresponds to 1 to 523 (MTGPIVYVQN…SPFPDRRPVY (523 aa)). Positions 115 to 454 (LELHLKNSTF…ADAVSVAYSG (340 aa)) constitute an SAC domain. Residues lysine 246 and lysine 358 each participate in a glycyl lysine isopeptide (Lys-Gly) (interchain with G-Cter in ubiquitin) cross-link. Residues 524 to 544 (IQLIPMIICAALTVLGATIFF) form a helical membrane-spanning segment. Residues 545 to 552 (PKDRFTSS) are Lumenal-facing. The chain crosses the membrane as a helical span at residues 553–573 (KNLLYFAGASIVLALSTKFMF). At 574 to 623 (KNGIQFVNWPKLVDVGFLVVHQTHDKEQQFKGLKYAQSPKFSKPDPLKRD) the chain is on the cytoplasmic side.

As to quaternary structure, component of the SPOTS complex, at least composed of LCB1/2 (LCB1 and/or LCB2), ORM1/2 (ORM1 and/or ORM2), SAC1 and TSC3.

It localises to the endoplasmic reticulum membrane. It is found in the golgi apparatus membrane. The catalysed reaction is a 1,2-diacyl-sn-glycero-3-phospho-(1D-myo-inositol-3-phosphate) + H2O = a 1,2-diacyl-sn-glycero-3-phospho-(1D-myo-inositol) + phosphate. It carries out the reaction a 1,2-diacyl-sn-glycero-3-phospho-(1D-myo-inositol 4-phosphate) + H2O = a 1,2-diacyl-sn-glycero-3-phospho-(1D-myo-inositol) + phosphate. In terms of biological role, phosphoinositide phosphatase which catalyzes the hydrolysis of phosphatidylinositol 3-phosphate (PtdIns(3)P) and phosphatidylinositol 4-phosphate (PtdIns(4)P). Has low activity towards phosphatidylinositol-3,5-bisphosphate (PtdIns(3,5)P2). May be involved in the coordination of the activities of the secretory pathway and the actin cytoskeleton. In Saccharomyces cerevisiae (strain ATCC 204508 / S288c) (Baker's yeast), this protein is Phosphatidylinositol-3-phosphatase SAC1 (SAC1).